The following is a 761-amino-acid chain: Subtilisin-like protease SBT3 (761 aa).

A signal peptide spans 1-22 (MELLHLLLFSWALSAHLFLALA). Residues 23–112 (QRSTYIVHLD…AYKDRTVEPH (90 aa)) constitute a propeptide that is removed on maturation. The Inhibitor I9 domain occupies 26-110 (TYIVHLDKSL…ISAYKDRTVE (85 aa)). One can recognise a Peptidase S8 domain in the interval 116-606 (TSDFLKLNPS…AGHVDPNRAL (491 aa)). The active-site Charge relay system is the Asp-144. A disulfide bridge connects residues Cys-170 and Cys-181. Residues Asn-177 and Asn-203 are each glycosylated (N-linked (GlcNAc...) (complex) asparagine; alternate). N-linked (GlcNAc...) (paucimannose) asparagine; alternate glycans are attached at residues Asn-177 and Asn-203. Residue His-215 is the Charge relay system of the active site. A glycan (N-linked (GlcNAc...) (paucimannose) asparagine; partial) is linked at Asn-376. Cysteines 382 and 401 form a disulfide. The active-site Charge relay system is the Ser-538. Residues 574-598 (LDNTRKPIKDSDNNKAATPLDMGAG) are disordered. A compositionally biased stretch (basic and acidic residues) spans 575–586 (DNTRKPIKDSDN). Residues Cys-624 and Cys-645 are joined by a disulfide bond. N-linked (GlcNAc...) (complex) asparagine; alternate glycosylation is found at Asn-697 and Asn-745. Residues Asn-697 and Asn-745 are each glycosylated (N-linked (GlcNAc...) (paucimannose) asparagine; alternate). The segment at 756–761 (PIIEVW) is necessary for prodomain cleavage and secretion.

This sequence belongs to the peptidase S8 family. In terms of assembly, homodimer. Propeptide is internally cleaved at Asn-38 and Asp-52 in a pH-dependent manner leading to the dissociation of the propeptide from the catalytic domain and resulting in the release of the active subtilase. Cleavage occurs at pH 5.7 and to a stronger extent at pH 5.2. Expressed in flowers, cotyledons and leaves with the highest expression in roots.

Its subcellular location is the secreted. With respect to regulation, inhibited by 1 mM 4-(2-aminoethyl)-benzenesulfonyl fluoride (AEBSF), a general inhibitor of serine proteinases, but not by the more selective serine protease inhibitors N-alpha-tosyl-L-lysinyl-chloromethylketone (TLCK), N-tosyl-L-phenylalaninyl-chloromethylketone (TPCK), leupeptin, aprotinin or benzamidine. Its proteolytic activity is autoinhibited by the non-covalent binding of the propeptide to the catalytic domain. No effect on activity by the addition of CaCl(2) or calcium chelators. Its function is as follows. Serine protease. Has preference for Gln in the P1 position and Lys in the P2 position of oligopeptide substrates. Active also with His in the P1 position. Involved in resistance against insects partly by regulating expression of systemic wound response genes and possibly by its post-ingestive activity in the insect gut. Apart from the role in defense, may be involved in regulation of pectin methylesterases (PMEs) activity and pectin methylesterification of the cell wall. The protein is Subtilisin-like protease SBT3 of Solanum lycopersicum (Tomato).